The primary structure comprises 917 residues: Protein FAN (917 aa).

Residues 176–247 (RLARTSFDKN…QDVRRIYKRR (72 aa)) enclose the GRAM domain. The region spanning 189-286 (NISEKLHMEC…DRDDLYFYIA (98 aa)) is the BEACH-type PH domain. A BEACH domain is found at 290–575 (EHHVAEHTAE…QLFVTPHPRR (286 aa)). WD repeat units follow at residues 628–658 (IHKE…KMFS), 670–700 (FSNM…YFYS), 712–740 (GHDD…KVWS), 761–791 (EHDV…NIWD), 803–833 (CHSG…NVID), and 884–914 (GHTG…IFWK).

In terms of tissue distribution, ubiquitous.

Its function is as follows. Couples the p55 TNF-receptor (TNF-R55 / TNFR1) to neutral sphingomyelinase (N-SMASE). Specifically binds to the N-smase activation domain of TNF-R55. May regulate ceramide production by N-SMASE. The sequence is that of Protein FAN (NSMAF) from Homo sapiens (Human).